Consider the following 345-residue polypeptide: Molybdate/tungstate import ATP-binding protein WtpC (345 aa).

An ABC transporter domain is found at 2–231 (LKVESISKDY…PKSEEVARFL (230 aa)). ATP is bound at residue 33 to 40 (GPSGSGKT). In terms of domain architecture, Mop spans 280–345 (KTSARNVFKA…FKASAIHVFP (66 aa)).

Belongs to the ABC transporter superfamily. Sulfate/tungstate importer (TC 3.A.1.6) family. The complex is composed of two ATP-binding proteins (WtpC), two transmembrane proteins (WtpB) and a solute-binding protein (WtpA).

Its subcellular location is the cell membrane. It carries out the reaction tungstate(in) + ATP + H2O = tungstate(out) + ADP + phosphate + H(+). In terms of biological role, part of the ABC transporter complex WtpABC involved in molybdate/tungstate import. Responsible for energy coupling to the transport system. The sequence is that of Molybdate/tungstate import ATP-binding protein WtpC (wtpC) from Pyrococcus horikoshii (strain ATCC 700860 / DSM 12428 / JCM 9974 / NBRC 100139 / OT-3).